The following is a 698-amino-acid chain: SPX domain-containing membrane protein OsI_21475 (698 aa).

Positions 2 to 145 (VNFGKKLMAD…GYRFTDYYVT (144 aa)) constitute an SPX domain. Transmembrane regions (helical) follow at residues 248–268 (FMSL…TYII), 279–299 (LGAA…AQIF), 316–336 (LIFS…AYDM), 339–357 (LTVL…ARAV), 376–396 (AGFV…AGLL), and 412–432 (LPGW…WISF). Residues 467–495 (LLRDSSKKDEDDDEEVDDSEEGTHDSRKP) form a disordered region. Residues 476–486 (EDDDEEVDDSE) are compositionally biased toward acidic residues. 5 helical membrane passes run 514–534 (LLIY…SSVI), 545–565 (AVAI…AVVG), 577–597 (LLMV…KITS), 605–625 (VVSA…NLSL), and 671–691 (LLNV…ASTF).

It belongs to the major facilitator superfamily.

Its subcellular location is the membrane. This is SPX domain-containing membrane protein OsI_21475 from Oryza sativa subsp. indica (Rice).